Consider the following 140-residue polypeptide: Endoribonuclease YbeY (140 aa).

Positions 100, 104, and 110 each coordinate Zn(2+).

Belongs to the endoribonuclease YbeY family. It depends on Zn(2+) as a cofactor.

It is found in the cytoplasm. Single strand-specific metallo-endoribonuclease involved in late-stage 70S ribosome quality control and in maturation of the 3' terminus of the 16S rRNA. This chain is Endoribonuclease YbeY, found in Helicobacter pylori (strain ATCC 700392 / 26695) (Campylobacter pylori).